The sequence spans 61 residues: Large ribosomal subunit protein uL29 (61 aa).

The protein belongs to the universal ribosomal protein uL29 family.

This Campylobacter lari (strain RM2100 / D67 / ATCC BAA-1060) protein is Large ribosomal subunit protein uL29.